The primary structure comprises 597 residues: UvrABC system protein C (597 aa).

Residues 15–93 (DNPGVYQYYD…IKTLQPRYNV (79 aa)) form the GIY-YIG domain. One can recognise a UVR domain in the interval 207-242 (KESLKDFKKLMNNYAQNLQFEEAQKIKEKIEVLENY).

Belongs to the UvrC family. As to quaternary structure, interacts with UvrB in an incision complex.

Its subcellular location is the cytoplasm. In terms of biological role, the UvrABC repair system catalyzes the recognition and processing of DNA lesions. UvrC both incises the 5' and 3' sides of the lesion. The N-terminal half is responsible for the 3' incision and the C-terminal half is responsible for the 5' incision. This Flavobacterium johnsoniae (strain ATCC 17061 / DSM 2064 / JCM 8514 / BCRC 14874 / CCUG 350202 / NBRC 14942 / NCIMB 11054 / UW101) (Cytophaga johnsonae) protein is UvrABC system protein C.